We begin with the raw amino-acid sequence, 296 residues long: Protoheme IX farnesyltransferase (296 aa).

9 helical membrane-spanning segments follow: residues 11 to 31 (PGII…AAQG), 35 to 55 (YPLF…GCVF), 84 to 104 (VTLV…YVAA), 107 to 127 (LAMW…SLYM), 132 to 152 (VYGT…GYCA), 162 to 182 (LILL…IAIF), 208 to 228 (ITLY…GGYA), 229 to 249 (GYKY…MALS), and 264 to 284 (LFVF…VDSM).

It belongs to the UbiA prenyltransferase family. Protoheme IX farnesyltransferase subfamily.

The protein localises to the cell inner membrane. It catalyses the reaction heme b + (2E,6E)-farnesyl diphosphate + H2O = Fe(II)-heme o + diphosphate. It participates in porphyrin-containing compound metabolism; heme O biosynthesis; heme O from protoheme: step 1/1. Functionally, converts heme B (protoheme IX) to heme O by substitution of the vinyl group on carbon 2 of heme B porphyrin ring with a hydroxyethyl farnesyl side group. This Pectobacterium atrosepticum (strain SCRI 1043 / ATCC BAA-672) (Erwinia carotovora subsp. atroseptica) protein is Protoheme IX farnesyltransferase.